The chain runs to 297 residues: Succinate dehydrogenase [ubiquinone] iron-sulfur subunit, mitochondrial (297 aa).

One can recognise a 2Fe-2S ferredoxin-type domain in the interval 47 to 140 (KKFEIYRWNP…SLKVYPLPHM (94 aa)). Cysteine 100, cysteine 105, cysteine 108, and cysteine 120 together coordinate [2Fe-2S] cluster. In terms of domain architecture, 4Fe-4S ferredoxin-type spans 185 to 215 (DRSKLDGLYECILCACCSTSCPSYWWNAEKY). 3 residues coordinate [4Fe-4S] cluster: cysteine 195, cysteine 198, and cysteine 201. Cysteine 205 contacts [3Fe-4S] cluster. Tryptophan 210 is an a ubiquinone binding site. Residues cysteine 252 and cysteine 258 each coordinate [3Fe-4S] cluster. Cysteine 262 contributes to the [4Fe-4S] cluster binding site.

This sequence belongs to the succinate dehydrogenase/fumarate reductase iron-sulfur protein family. In terms of assembly, component of complex II composed of four subunits: a flavoprotein (FP), an iron-sulfur protein (IP), and a cytochrome b composed of a large and a small subunit. [2Fe-2S] cluster serves as cofactor. [3Fe-4S] cluster is required as a cofactor. Requires [4Fe-4S] cluster as cofactor. In terms of tissue distribution, most abundant in the adult thorax and low in abdominal tissues.

The protein localises to the mitochondrion inner membrane. The catalysed reaction is a quinone + succinate = fumarate + a quinol. It functions in the pathway carbohydrate metabolism; tricarboxylic acid cycle; fumarate from succinate (eukaryal route): step 1/1. In terms of biological role, iron-sulfur protein (IP) subunit of succinate dehydrogenase (SDH) that is involved in complex II of the mitochondrial electron transport chain and is responsible for transferring electrons from succinate to ubiquinone (coenzyme Q). In Drosophila melanogaster (Fruit fly), this protein is Succinate dehydrogenase [ubiquinone] iron-sulfur subunit, mitochondrial (SdhB).